Consider the following 211-residue polypeptide: Ion-translocating oxidoreductase complex subunit G (211 aa).

Residues 9-29 form a helical membrane-spanning segment; it reads GLTLAIFACATTGLVAMTQYL. Threonine 175 carries the post-translational modification FMN phosphoryl threonine.

This sequence belongs to the RnfG family. As to quaternary structure, the complex is composed of six subunits: RnfA, RnfB, RnfC, RnfD, RnfE and RnfG. It depends on FMN as a cofactor.

The protein resides in the cell inner membrane. Part of a membrane-bound complex that couples electron transfer with translocation of ions across the membrane. This Vibrio vulnificus (strain YJ016) protein is Ion-translocating oxidoreductase complex subunit G.